We begin with the raw amino-acid sequence, 259 residues long: GDP-perosamine N-formyltransferase (259 aa).

(6S)-5,6,7,8-tetrahydrofolate-binding positions include 89–91 (SLI) and 139–143 (DENFD).

Belongs to the Fmt family. In terms of assembly, homodimer.

The enzyme catalyses GDP-alpha-D-perosamine + (6R)-10-formyltetrahydrofolate = GDP-N-formyl-alpha-D-perosamine + (6S)-5,6,7,8-tetrahydrofolate + H(+). Its pathway is bacterial outer membrane biogenesis; lipopolysaccharide biosynthesis. Involved in the lipopolysaccharide (LPS) O-antigen biosynthesis. Catalyzes the transfer of a formyl group to GDP-perosamine, leading to the formation of GDP-N-formylperosamine. Is critical for full bacterial virulence. This is GDP-perosamine N-formyltransferase from Brucella abortus (strain 2308).